The chain runs to 308 residues: Homoserine kinase (308 aa).

Residue 95–105 (PQSRGLGSSAA) participates in ATP binding.

The protein belongs to the GHMP kinase family. Homoserine kinase subfamily.

The protein localises to the cytoplasm. It carries out the reaction L-homoserine + ATP = O-phospho-L-homoserine + ADP + H(+). It participates in amino-acid biosynthesis; L-threonine biosynthesis; L-threonine from L-aspartate: step 4/5. Functionally, catalyzes the ATP-dependent phosphorylation of L-homoserine to L-homoserine phosphate. This is Homoserine kinase from Corynebacterium diphtheriae (strain ATCC 700971 / NCTC 13129 / Biotype gravis).